We begin with the raw amino-acid sequence, 843 residues long: Protein P (843 aa).

The interval 1–177 (MPLSYQHFRK…FCGSPYSWEQ (177 aa)) is terminal protein domain (TP). The interval 178–346 (DLQHGRLVFQ…YCLYHIVNLI (169 aa)) is spacer. The interval 219 to 250 (RKSRLGPQPAQGQLAGRQQGGSGSIRARVHPS) is disordered. The segment covering 223–235 (LGPQPAQGQLAGR) has biased composition (low complexity). Residues 347–690 (EDWGPCTEHG…YLNLYPVARQ (344 aa)) are polymerase/reverse transcriptase domain (RT). The Reverse transcriptase domain occupies 357–600 (EHRIRTPRTP…YSLNFMGYVI (244 aa)). Mg(2+)-binding residues include Asp-429, Asp-551, and Asp-552.

It belongs to the hepadnaviridae P protein family.

It catalyses the reaction DNA(n) + a 2'-deoxyribonucleoside 5'-triphosphate = DNA(n+1) + diphosphate. The enzyme catalyses Endonucleolytic cleavage to 5'-phosphomonoester.. Activated by host HSP70 and HSP40 in vitro to be able to bind the epsilon loop of the pgRNA. Because deletion of the RNase H region renders the protein partly chaperone-independent, the chaperones may be needed indirectly to relieve occlusion of the RNA-binding site by this domain. Inhibited by several reverse-transcriptase inhibitors: Lamivudine, Adefovir and Entecavir. In terms of biological role, multifunctional enzyme that converts the viral RNA genome into dsDNA in viral cytoplasmic capsids. This enzyme displays a DNA polymerase activity that can copy either DNA or RNA templates, and a ribonuclease H (RNase H) activity that cleaves the RNA strand of RNA-DNA heteroduplexes in a partially processive 3'- to 5'-endonucleasic mode. Neo-synthesized pregenomic RNA (pgRNA) are encapsidated together with the P protein, and reverse-transcribed inside the nucleocapsid. Initiation of reverse-transcription occurs first by binding the epsilon loop on the pgRNA genome, and is initiated by protein priming, thereby the 5'-end of (-)DNA is covalently linked to P protein. Partial (+)DNA is synthesized from the (-)DNA template and generates the relaxed circular DNA (RC-DNA) genome. After budding and infection, the RC-DNA migrates in the nucleus, and is converted into a plasmid-like covalently closed circular DNA (cccDNA). The activity of P protein does not seem to be necessary for cccDNA generation, and is presumably released from (+)DNA by host nuclear DNA repair machinery. This chain is Protein P, found in Hepatitis B virus genotype B2 (isolate Vietnam/16091/1992) (HBV-B).